Reading from the N-terminus, the 282-residue chain is Nucleotide-binding protein XAC2976 (282 aa).

5–12 (GLSGSGKS) is a binding site for ATP. Residue 57–60 (DVRS) participates in GTP binding.

This sequence belongs to the RapZ-like family.

Functionally, displays ATPase and GTPase activities. This is Nucleotide-binding protein XAC2976 from Xanthomonas axonopodis pv. citri (strain 306).